The sequence spans 217 residues: Oxygen regulatory protein NreC (217 aa).

The Response regulatory domain occupies 2 to 119 (KIVIADDHAV…QLLLAIRTVY (118 aa)). 4-aspartylphosphate is present on D53. Residues 148–213 (TSDPFKILSK…ELVEYALKKK (66 aa)) form the HTH luxR-type domain. The H-T-H motif DNA-binding region spans 172–191 (NKEIAEKLFVSVKTVEAHKT).

In terms of processing, phosphorylated by NreB.

The protein resides in the cytoplasm. In terms of biological role, member of the two-component regulatory system NreB/NreC involved in the control of dissimilatory nitrate/nitrite reduction in response to oxygen. Phosphorylated NreC binds to a GC-rich palindromic sequence at the promoters of the nitrate (narGHJI) and nitrite (nir) reductase operons, as well as the putative nitrate transporter gene narT, and activates their expression. The chain is Oxygen regulatory protein NreC (nreC) from Staphylococcus aureus (strain bovine RF122 / ET3-1).